The sequence spans 303 residues: N-acetyl-D-glucosamine kinase (303 aa).

ATP is bound by residues 4–11 and 133–140; these read GFDIGGTK and GVGGGLVF. Residues H157, C177, C179, and C184 each contribute to the Zn(2+) site.

It belongs to the ROK (NagC/XylR) family. NagK subfamily.

It catalyses the reaction N-acetyl-D-glucosamine + ATP = N-acetyl-D-glucosamine 6-phosphate + ADP + H(+). The protein operates within cell wall biogenesis; peptidoglycan recycling. Its function is as follows. Catalyzes the phosphorylation of N-acetyl-D-glucosamine (GlcNAc) derived from cell-wall degradation, yielding GlcNAc-6-P. The protein is N-acetyl-D-glucosamine kinase of Shigella flexneri serotype 5b (strain 8401).